A 75-amino-acid polypeptide reads, in one-letter code: Transcription attenuation protein MtrB (75 aa).

Belongs to the MtrB family. Oligomer of 11 identical subunits arranged in doughnut-like structure.

In terms of biological role, required for transcription attenuation control in the Trp operon. This trans-acting factor seems to recognize a 10 bases nucleotide sequence in the Trp leader transcript causing transcription termination. Binds the leader RNA only in presence of L-tryptophan. In Bacillus velezensis (strain DSM 23117 / BGSC 10A6 / LMG 26770 / FZB42) (Bacillus amyloliquefaciens subsp. plantarum), this protein is Transcription attenuation protein MtrB.